A 184-amino-acid polypeptide reads, in one-letter code: UPF0397 protein SAS2570 (184 aa).

Transmembrane regions (helical) follow at residues 11 to 31, 44 to 64, 77 to 97, 111 to 131, and 148 to 168; these read VVAIGIGAAVFVILGRFVVIP, AFLALISAIFGPFAGLMTGLV, AWWSWVICSGIIGCLYGWIGL, MIYFNIGQIIANIICWALIAP, and QGVISAVLNIISVGIIGTILL.

It belongs to the UPF0397 family.

Its subcellular location is the cell membrane. The chain is UPF0397 protein SAS2570 from Staphylococcus aureus (strain MSSA476).